The following is a 230-amino-acid chain: MIRKSSGLRTLESALYRSGLGPVAGVDEVGRGACAGPLVVAACVLGPGKLESLAALDDSKKLTESVRERLFPVIRRYALAYHVVFIPPAEVDRRGVHVANIEGMRRAVAGLSLRPGYVLSDGFRVPGLAVPSLPVIGGDAVAACIAAASVLAKVSRDRLMVAMDAEHPGYGFADHKGYSTPAHSAALARLGPCPQHRHSFINVRRVANGSGGRVVADCKPDLPLQRDEGR.

The region spanning 21–212 (GPVAGVDEVG…VRRVANGSGG (192 aa)) is the RNase H type-2 domain. 3 residues coordinate a divalent metal cation: D27, E28, and D121.

The protein belongs to the RNase HII family. Mn(2+) serves as cofactor. Mg(2+) is required as a cofactor.

It is found in the cytoplasm. It carries out the reaction Endonucleolytic cleavage to 5'-phosphomonoester.. In terms of biological role, endonuclease that specifically degrades the RNA of RNA-DNA hybrids. This chain is Ribonuclease HII, found in Mycobacterium avium (strain 104).